The primary structure comprises 95 residues: Small ribosomal subunit protein bS20c (95 aa).

The protein belongs to the bacterial ribosomal protein bS20 family.

The protein resides in the plastid. It is found in the chloroplast. Functionally, binds directly to 16S ribosomal RNA. The protein is Small ribosomal subunit protein bS20c of Pyropia yezoensis (Susabi-nori).